Consider the following 115-residue polypeptide: Large ribosomal subunit protein uL18 (115 aa).

It belongs to the universal ribosomal protein uL18 family. As to quaternary structure, part of the 50S ribosomal subunit; part of the 5S rRNA/L5/L18/L25 subcomplex. Contacts the 5S and 23S rRNAs.

In terms of biological role, this is one of the proteins that bind and probably mediate the attachment of the 5S RNA into the large ribosomal subunit, where it forms part of the central protuberance. In Baumannia cicadellinicola subsp. Homalodisca coagulata, this protein is Large ribosomal subunit protein uL18.